The following is an 87-amino-acid chain: Small ribosomal subunit protein bS18 (87 aa).

It belongs to the bacterial ribosomal protein bS18 family. Part of the 30S ribosomal subunit. Forms a tight heterodimer with protein bS6.

Its function is as follows. Binds as a heterodimer with protein bS6 to the central domain of the 16S rRNA, where it helps stabilize the platform of the 30S subunit. This chain is Small ribosomal subunit protein bS18, found in Sulfurovum sp. (strain NBC37-1).